The chain runs to 334 residues: Glycerol-1-phosphate dehydrogenase [NAD(P)+] (334 aa).

Residues 77-81 (GRPID) and 99-102 (TTAS) contribute to the NAD(+) site. D104 provides a ligand contact to substrate. NAD(+) is bound at residue S108. A substrate-binding site is contributed by D147. Residues D147 and H225 each coordinate Zn(2+). H229 provides a ligand contact to substrate. H246 is a Zn(2+) binding site.

It belongs to the glycerol-1-phosphate dehydrogenase family. The cofactor is Zn(2+).

It localises to the cytoplasm. The catalysed reaction is sn-glycerol 1-phosphate + NAD(+) = dihydroxyacetone phosphate + NADH + H(+). It catalyses the reaction sn-glycerol 1-phosphate + NADP(+) = dihydroxyacetone phosphate + NADPH + H(+). Its pathway is membrane lipid metabolism; glycerophospholipid metabolism. Its function is as follows. Catalyzes the NAD(P)H-dependent reduction of dihydroxyacetonephosphate (DHAP or glycerone phosphate) to glycerol 1-phosphate (G1P). The G1P thus generated is used as the glycerophosphate backbone of phospholipids in the cellular membranes of Archaea. The protein is Glycerol-1-phosphate dehydrogenase [NAD(P)+] of Methanococcus maripaludis (strain C7 / ATCC BAA-1331).